The primary structure comprises 229 residues: 5'-methylthioadenosine/S-adenosylhomocysteine nucleosidase (229 aa).

The Proton acceptor role is filled by Glu12. Residues Gly78, Met152, and 173 to 174 (ME) each bind substrate. Asp197 functions as the Proton donor in the catalytic mechanism.

Belongs to the PNP/UDP phosphorylase family. MtnN subfamily.

It carries out the reaction S-adenosyl-L-homocysteine + H2O = S-(5-deoxy-D-ribos-5-yl)-L-homocysteine + adenine. The catalysed reaction is S-methyl-5'-thioadenosine + H2O = 5-(methylsulfanyl)-D-ribose + adenine. It catalyses the reaction 5'-deoxyadenosine + H2O = 5-deoxy-D-ribose + adenine. It participates in amino-acid biosynthesis; L-methionine biosynthesis via salvage pathway; S-methyl-5-thio-alpha-D-ribose 1-phosphate from S-methyl-5'-thioadenosine (hydrolase route): step 1/2. Catalyzes the irreversible cleavage of the glycosidic bond in both 5'-methylthioadenosine (MTA) and S-adenosylhomocysteine (SAH/AdoHcy) to adenine and the corresponding thioribose, 5'-methylthioribose and S-ribosylhomocysteine, respectively. Also cleaves 5'-deoxyadenosine, a toxic by-product of radical S-adenosylmethionine (SAM) enzymes, into 5-deoxyribose and adenine. The protein is 5'-methylthioadenosine/S-adenosylhomocysteine nucleosidase of Oceanobacillus iheyensis (strain DSM 14371 / CIP 107618 / JCM 11309 / KCTC 3954 / HTE831).